Consider the following 221-residue polypeptide: CDC5 pindle pole body anchor protein 1 (221 aa).

Residues 142-221 (KNIERDNLKP…PTEDSVPHAE (80 aa)) form a disordered region. Residues Ser158, Ser170, and Ser175 each carry the phosphoserine modification. The short motif at 165 to 170 (PLVTSS) is the CDC5-binding element. Positions 166–188 (LVTSSPIHMSPLQSRQRPVSSLQ) are enriched in polar residues. The CLB3-docking motif lies at 189–195 (PPKGPNF). The CDC14-binding signature appears at 200–202 (PKL).

Interacts with CDC5 and CDC14. Post-translationally, phosphorylated by CLB3-CDK1 in metaphase which is required for correct localization at the nuclear envelop and the spindle pole body, and dephosphorylated by CDC14 in early anaphase.

It is found in the nucleus membrane. The protein resides in the cytoplasm. The protein localises to the cytoskeleton. Its subcellular location is the microtubule organizing center. It localises to the spindle pole body. Functionally, specialized component of the nuclear membrane that may be involved in the connection of the spindle pole body (SPB) to the nuclear envelope. Recruits CDC5 to spindle pole bodies in metaphase. The sequence is that of CDC5 pindle pole body anchor protein 1 from Saccharomyces cerevisiae (strain ATCC 204508 / S288c) (Baker's yeast).